Here is a 1088-residue protein sequence, read N- to C-terminus: DNA polymerase II large subunit (1088 aa).

This sequence belongs to the archaeal DNA polymerase II family. In terms of assembly, heterodimer of a large subunit and a small subunit.

It catalyses the reaction DNA(n) + a 2'-deoxyribonucleoside 5'-triphosphate = DNA(n+1) + diphosphate. It carries out the reaction Exonucleolytic cleavage in the 3'- to 5'-direction to yield nucleoside 5'-phosphates.. In terms of biological role, possesses two activities: a DNA synthesis (polymerase) and an exonucleolytic activity that degrades single-stranded DNA in the 3'- to 5'-direction. Has a template-primer preference which is characteristic of a replicative DNA polymerase. This Thermoplasma volcanium (strain ATCC 51530 / DSM 4299 / JCM 9571 / NBRC 15438 / GSS1) protein is DNA polymerase II large subunit (polC).